The primary structure comprises 118 residues: Large ribosomal subunit protein uL22 (118 aa).

Belongs to the universal ribosomal protein uL22 family. As to quaternary structure, part of the 50S ribosomal subunit.

Functionally, this protein binds specifically to 23S rRNA; its binding is stimulated by other ribosomal proteins, e.g. L4, L17, and L20. It is important during the early stages of 50S assembly. It makes multiple contacts with different domains of the 23S rRNA in the assembled 50S subunit and ribosome. Its function is as follows. The globular domain of the protein is located near the polypeptide exit tunnel on the outside of the subunit, while an extended beta-hairpin is found that lines the wall of the exit tunnel in the center of the 70S ribosome. This is Large ribosomal subunit protein uL22 from Nostoc punctiforme (strain ATCC 29133 / PCC 73102).